We begin with the raw amino-acid sequence, 405 residues long: 3-isopropylmalate dehydrogenase 2, chloroplastic (405 aa).

Residues 1 to 33 (MAAALQTNIRTVKVPATFRAVSKQSLAPFRVRC) constitute a chloroplast transit peptide. A Phosphoserine modification is found at S70. 114–129 (IGGYKWDNNEKHLRPE) contacts NAD(+). 3 residues coordinate substrate: R136, R146, and R174. N234 is a binding site for NAD(+). D264 lines the substrate pocket. D264 lines the Mg(2+) pocket. N265 is an NAD(+) binding site. Mg(2+) is bound by residues D288 and D292. 318–334 (EPIHGSAPDIAGQDKAN) lines the NAD(+) pocket.

Belongs to the isocitrate and isopropylmalate dehydrogenases family. In terms of assembly, homodimer. It depends on Mg(2+) as a cofactor. Requires Mn(2+) as cofactor. Expressed at low levels in seedlings, cotyledons, hypocotyls, flowers, roots, pollen, leaves and stems.

The protein resides in the plastid. It localises to the chloroplast stroma. It catalyses the reaction (2R,3S)-3-isopropylmalate + NAD(+) = 4-methyl-2-oxopentanoate + CO2 + NADH. It participates in amino-acid biosynthesis; L-leucine biosynthesis; L-leucine from 3-methyl-2-oxobutanoate: step 3/4. With respect to regulation, regulated by a thiol-based redox modification. Involved in leucine biosynthesis; catalyzes the oxidative decarboxylation step in leucine biosynthesis (primary metabolism). Catalyzes the oxidation of 3-carboxy-2-hydroxy-4-methylpentanoate (3-isopropylmalate, 3-IPM) to 3-carboxy-4-methyl-2-oxopentanoate. The product decarboxylates to 4-methyl-2 oxopentanoate. Required during pollen development and involved in embryo sac development. The protein is 3-isopropylmalate dehydrogenase 2, chloroplastic of Arabidopsis thaliana (Mouse-ear cress).